The chain runs to 695 residues: Nucleoprotein (695 aa).

Coiled coils occupy residues 316–341 and 372–399; these read VNVG…RRHE and QTLA…VEDQ. 2 disordered regions span residues 424 to 458 and 483 to 615; these read QARP…SFVD and TSRE…AREA. Over residues 438–447 the composition is skewed to basic and acidic residues; sequence VDDKIEHEST. Polar residues-rich tracts occupy residues 494 to 505 and 537 to 552; these read PGQSQDLDNSQG and TTDS…SDNE. Positions 603 to 606 match the PTAP/PSAP motif motif; the sequence is PSAP.

This sequence belongs to the filoviruses nucleoprotein family. As to quaternary structure, homooligomer. Homomultimerizes to form the nucleocapsid. Binds to viral genomic RNA. Interacts with VP35 and VP30 to form the nucleocapsid. Also interacts with VP24 and VP40. Phosphorylated.

It localises to the virion. The protein resides in the host cytoplasm. In terms of biological role, encapsidates the genome, protecting it from nucleases. The encapsidated genomic RNA is termed the nucleocapsid and serves as template for transcription and replication. During replication, encapsidation by NP is coupled to RNA synthesis and all replicative products are resistant to nucleases. In Lake Victoria marburgvirus (strain Ozolin-75) (MARV), this protein is Nucleoprotein (NP).